The primary structure comprises 234 residues: Exotoxin type G (234 aa).

A signal peptide spans 1–24 (MKTNILTIIILSCVFSYGSQLAYA).

The protein belongs to the staphylococcal/streptococcal toxin family.

Mitogenic for human peripheral blood lymphocytes. This Streptococcus pyogenes serotype M1 protein is Exotoxin type G (speG).